Consider the following 216-residue polypeptide: Uracil phosphoribosyltransferase (216 aa).

CTP is bound by residues Arg29–Lys30 and Arg37. Lys30 to Arg34 serves as a coordination point for GTP. Arg80 is a 5-phospho-alpha-D-ribose 1-diphosphate binding site. Glu87–Ala96 provides a ligand contact to CTP. 5-phospho-alpha-D-ribose 1-diphosphate is bound by residues Arg105 and Asp140–Thr148. Residues Ile203 and Gly208–Ala210 each bind uracil. Residue Asp209 coordinates 5-phospho-alpha-D-ribose 1-diphosphate.

The protein belongs to the UPRTase family. In terms of assembly, homotetramer. Mg(2+) is required as a cofactor.

The catalysed reaction is UMP + diphosphate = 5-phospho-alpha-D-ribose 1-diphosphate + uracil. It participates in pyrimidine metabolism; UMP biosynthesis via salvage pathway; UMP from uracil: step 1/1. With respect to regulation, allosterically activated by GTP. Inhibited by CTP and UMP in combination. Its function is as follows. Catalyzes the conversion of uracil and 5-phospho-alpha-D-ribose 1-diphosphate (PRPP) to UMP and diphosphate. The sequence is that of Uracil phosphoribosyltransferase (upp) from Saccharolobus solfataricus (strain ATCC 35092 / DSM 1617 / JCM 11322 / P2) (Sulfolobus solfataricus).